The chain runs to 352 residues: N-lysine methyltransferase KMT5A (352 aa).

Residues Ala-21–Gln-51 are disordered. The residue at position 59 (Ser-59) is a Phosphoserine. The disordered stretch occupies residues Pro-87 to Glu-202. The segment covering Met-109–Arg-121 has biased composition (basic and acidic residues). Thr-140 bears the Phosphothreonine mark. Residues Gly-156–Gln-172 are compositionally biased toward basic residues. Residues Glu-216–Gly-337 form the SET domain. S-adenosyl-L-methionine contacts are provided by residues Lys-226–Arg-228, Tyr-271, and Asn-298–His-299.

The protein belongs to the class V-like SAM-binding methyltransferase superfamily. Histone-lysine methyltransferase family. PR/SET subfamily. Interacts with L3MBTL1. Interacts with SIRT2 (phosphorylated form); the interaction is direct, stimulates KMT5A-mediated methyltransferase activity at histone H4 'Lys-20' (H4K20me1) and is increased in a H(2)O(2)-induced oxidative stress-dependent manner. Post-translationally, ubiquitinated and degraded by the DCX(DTL) complex.

The protein localises to the nucleus. It localises to the chromosome. The enzyme catalyses L-lysyl(20)-[histone H4] + S-adenosyl-L-methionine = N(6)-methyl-L-lysyl(20)-[histone H4] + S-adenosyl-L-homocysteine + H(+). The catalysed reaction is L-lysyl-[protein] + S-adenosyl-L-methionine = N(6)-methyl-L-lysyl-[protein] + S-adenosyl-L-homocysteine + H(+). Protein-lysine N-methyltransferase that monomethylates both histones and non-histone proteins. Specifically monomethylates 'Lys-20' of histone H4 (H4K20me1). H4K20me1 is enriched during mitosis and represents a specific tag for epigenetic transcriptional repression. Mainly functions in euchromatin regions, thereby playing a central role in the silencing of euchromatic genes. Required for cell proliferation, probably by contributing to the maintenance of proper higher-order structure of DNA during mitosis. Involved in chromosome condensation and proper cytokinesis. Nucleosomes are preferred as substrate compared to free histones. Mediates monomethylation of p53/TP53 at 'Lys-382', leading to repress p53/TP53-target genes. Plays a negative role in TGF-beta response regulation and a positive role in cell migration. The chain is N-lysine methyltransferase KMT5A from Bos taurus (Bovine).